The chain runs to 213 residues: Translation initiation factor IF-3 (213 aa).

Residues 178–213 are disordered; that stretch reads VKTLIKSEKPEKPEKPEKSEKTEKQGPSTPPAPSAS. Basic and acidic residues predominate over residues 182 to 201; sequence IKSEKPEKPEKPEKSEKTEK.

This sequence belongs to the IF-3 family. Monomer.

Its subcellular location is the cytoplasm. Its function is as follows. IF-3 binds to the 30S ribosomal subunit and shifts the equilibrium between 70S ribosomes and their 50S and 30S subunits in favor of the free subunits, thus enhancing the availability of 30S subunits on which protein synthesis initiation begins. The sequence is that of Translation initiation factor IF-3 from Solibacter usitatus (strain Ellin6076).